The primary structure comprises 166 residues: Regulatory protein RecX (166 aa).

This sequence belongs to the RecX family.

It is found in the cytoplasm. Modulates RecA activity. This is Regulatory protein RecX from Salmonella agona (strain SL483).